Reading from the N-terminus, the 283-residue chain is Pantothenate synthetase (283 aa).

34-41 provides a ligand contact to ATP; it reads MGALHDGH. Residue H41 is the Proton donor of the active site. Q65 provides a ligand contact to (R)-pantoate. Q65 is a beta-alanine binding site. 152–155 is a binding site for ATP; the sequence is GSKD. (R)-pantoate is bound at residue Q158. Residues I181 and 189–192 contribute to the ATP site; that span reads MSSR.

Belongs to the pantothenate synthetase family. Homodimer.

The protein localises to the cytoplasm. The enzyme catalyses (R)-pantoate + beta-alanine + ATP = (R)-pantothenate + AMP + diphosphate + H(+). Its pathway is cofactor biosynthesis; (R)-pantothenate biosynthesis; (R)-pantothenate from (R)-pantoate and beta-alanine: step 1/1. In terms of biological role, catalyzes the condensation of pantoate with beta-alanine in an ATP-dependent reaction via a pantoyl-adenylate intermediate. This chain is Pantothenate synthetase, found in Rhodopseudomonas palustris (strain HaA2).